A 233-amino-acid polypeptide reads, in one-letter code: Antiholin-like protein LrgB (233 aa).

7 helical membrane-spanning segments follow: residues 7–27, 33–53, 63–83, 97–117, 124–144, 152–172, and 212–232; these read INTP…ATFL, GFFL…FLKL, IGGD…AIPL, ILGG…LIAE, GIIA…PVSA, LTSL…SKLI, and ISLV…ATLL.

It belongs to the CidB/LrgB family. LrgB subfamily.

The protein localises to the cell membrane. Inhibits the expression or activity of extracellular murein hydrolases by interacting, possibly with LrgA, with the holin-like proteins CidA and/or CidB. The LrgAB and CidAB proteins may affect the proton motive force of the membrane. May be involved in programmed cell death (PCD), possibly triggering PCD in response to antibiotics and environmental stresses. The chain is Antiholin-like protein LrgB from Staphylococcus saprophyticus subsp. saprophyticus (strain ATCC 15305 / DSM 20229 / NCIMB 8711 / NCTC 7292 / S-41).